Reading from the N-terminus, the 676-residue chain is DNA ligase (676 aa).

NAD(+) contacts are provided by residues 34–38, 84–85, and E116; these read DAEYD and SL. Residue K118 is the N6-AMP-lysine intermediate of the active site. 4 residues coordinate NAD(+): R139, E174, K294, and K318. C412, C415, C428, and C433 together coordinate Zn(2+). The BRCT domain occupies 589-676; the sequence is KGGEALKGLT…RTGKKAEELV (88 aa).

This sequence belongs to the NAD-dependent DNA ligase family. LigA subfamily. It depends on Mg(2+) as a cofactor. The cofactor is Mn(2+).

It catalyses the reaction NAD(+) + (deoxyribonucleotide)n-3'-hydroxyl + 5'-phospho-(deoxyribonucleotide)m = (deoxyribonucleotide)n+m + AMP + beta-nicotinamide D-nucleotide.. DNA ligase that catalyzes the formation of phosphodiester linkages between 5'-phosphoryl and 3'-hydroxyl groups in double-stranded DNA using NAD as a coenzyme and as the energy source for the reaction. It is essential for DNA replication and repair of damaged DNA. The chain is DNA ligase from Thermus thermophilus (strain ATCC 27634 / DSM 579 / HB8).